A 122-amino-acid polypeptide reads, in one-letter code: Large ribosomal subunit protein uL14c (122 aa).

The protein belongs to the universal ribosomal protein uL14 family. As to quaternary structure, part of the 50S ribosomal subunit.

It is found in the plastid. Its subcellular location is the chloroplast. Its function is as follows. Binds to 23S rRNA. This is Large ribosomal subunit protein uL14c from Psilotum nudum (Whisk fern).